Here is a 314-residue protein sequence, read N- to C-terminus: MEDKRNIQIIEWEHLDKKKFYVFGVAMTMMIRVSVYPFTLIRTRLQVQKGKSLYHGTFDAFIKILRADGITGLYRGFLVNTFTLISGQCYVTTYELTRKFVADYSQSNTVKSLVAGGSASLVAQSITVPIDVVSQHLMMQRKGEKMGRFQVRGNPEGQGVVAFGQTKDIIRQILRADGLRGFYRGYVASLLTYIPNSAVWWPFYHFYAEQLSYLCPKECPHIVFQAVSGPLAAATASILTNPMDVIRTRVQVEGKNSIILTFRQLMAEEGPWGLMKGLSARIISATPSTIVIVVGYESLKKLSLRPELVDSRHW.

Solcar repeat units lie at residues lysine 18–phenylalanine 100, serine 107–glutamine 210, and proline 220–leucine 302. Transmembrane regions (helical) follow at residues phenylalanine 20–arginine 42, threonine 71–tyrosine 90, leucine 113–valine 133, glycine 185–tryptophan 201, isoleucine 222–leucine 239, and leucine 278–tyrosine 296.

Belongs to the mitochondrial carrier (TC 2.A.29) family.

It is found in the mitochondrion membrane. The enzyme catalyses L-valine(in) = L-valine(out). The catalysed reaction is L-leucine(in) = L-leucine(out). Mitochondrial solute transporter which transports branched-chain amino acid (BCAA; valine, leucine and isoleucine) into mitochondria in brown adipose tissue (BAT). BAT is involved in BCAA catabolism and actively utilizes BCAA in the mitochondria for thermogenesis. The chain is Solute carrier family 25 member 44 from Pongo abelii (Sumatran orangutan).